The primary structure comprises 121 residues: Large ribosomal subunit protein eL34B (121 aa).

It belongs to the eukaryotic ribosomal protein eL34 family. Component of the large ribosomal subunit (LSU). Mature yeast ribosomes consist of a small (40S) and a large (60S) subunit. The 40S small subunit contains 1 molecule of ribosomal RNA (18S rRNA) and 33 different proteins (encoded by 57 genes). The large 60S subunit contains 3 rRNA molecules (25S, 5.8S and 5S rRNA) and 46 different proteins (encoded by 81 genes).

Its subcellular location is the cytoplasm. In terms of biological role, component of the ribosome, a large ribonucleoprotein complex responsible for the synthesis of proteins in the cell. The small ribosomal subunit (SSU) binds messenger RNAs (mRNAs) and translates the encoded message by selecting cognate aminoacyl-transfer RNA (tRNA) molecules. The large subunit (LSU) contains the ribosomal catalytic site termed the peptidyl transferase center (PTC), which catalyzes the formation of peptide bonds, thereby polymerizing the amino acids delivered by tRNAs into a polypeptide chain. The nascent polypeptides leave the ribosome through a tunnel in the LSU and interact with protein factors that function in enzymatic processing, targeting, and the membrane insertion of nascent chains at the exit of the ribosomal tunnel. This chain is Large ribosomal subunit protein eL34B, found in Saccharomyces cerevisiae (strain ATCC 204508 / S288c) (Baker's yeast).